Consider the following 183-residue polypeptide: Ribosome rescue factor SmrB (183 aa).

A Smr domain is found at 98 to 173 (LDLHGLTQLQ…GDAALLVLIE (76 aa)).

The protein belongs to the SmrB family. Associates with collided ribosomes, but not with correctly translating polysomes.

Acts as a ribosome collision sensor. Detects stalled/collided disomes (pairs of ribosomes where the leading ribosome is stalled and a second ribosome has collided with it) and endonucleolytically cleaves mRNA at the 5' boundary of the stalled ribosome. Stalled/collided disomes form a new interface (primarily via the 30S subunits) that binds SmrB. Cleaved mRNA becomes available for tmRNA ligation, leading to ribosomal subunit dissociation and rescue of stalled ribosomes. This chain is Ribosome rescue factor SmrB, found in Shigella boydii serotype 18 (strain CDC 3083-94 / BS512).